Reading from the N-terminus, the 73-residue chain is Homeodomain-only protein (73 aa).

The homeobox; degenerate DNA-binding region spans 3–62 (TEKSVTPTEEQLEILEYNFCKVNKHPDPTTLCLIAAETGLSEEQTLKWFKQRLAEWRKSE).

The protein localises to the nucleus. Its subcellular location is the cytoplasm. In terms of biological role, atypical homeodomain protein which does not bind DNA and is required to modulate cardiac growth and development. May act via an interaction with SRF, leading to modulate the expression of SRF-dependent cardiac-specific genes and cardiac development. May act as a co-chaperone for HSPA1A and HSPA1B chaperone proteins and assist in chaperone-mediated protein refolding. This is Homeodomain-only protein (HOPX) from Gallus gallus (Chicken).